The chain runs to 831 residues: MTVSPSALAELGFNYQEEDSVRPWAAVLVDLPQNEGVYTYAIPPGLTVQDGDIVAVPFGNQQLGGIVVGCLTKLPPDLPPEKIKPIQDVIVSGFFAPHYWRLLHWLAEYYCTELITVIRMALPPGLLQRSQRRIKLNGDRLPSDWPLFLSQPSHQGARQILTLLQSSKEGDYSYRYLRQKVPGLTKALRDLLKRQWVESYLEPPKAVQPQLPKMVTLLNFDPSFKLTELQARTLIVLKNQGGEMWLADLLKAVPCSASTIQSLAKKGLVAIAEREKLRLFQQPSINASQAPELTPAQKQACQTVLPLQGYHQVLLHGVTGSGKTEVYLQICGDRLGKGQSVLVLVPEIGLTPQLTDRFRARFGNKVAVYHSGLSSGEKYDTWRQTLLGHEQIVIGTRSAIFTPLPNLGLIILDEEHDSSFKQTQLTPNYHARTVAQRRAELEQCPLILGSATPSLESWHTVHRHQNDPQRHYLELPERVQSRPLPPVQIVDMRAELKQGNRSIFSRALQTALGELKAKQQQGILFINRRGHSTFVSCRSCGYVLECPNCDVSLSYHYVQGNGQPLLRCHYCNHAEIQPKVCPECSSPYLKFFGSGTQKVTEALTQEFPDLRWIRFDSDTTRRKGAHRALLDQFQRGEADLLVGTQMLTKGLDLAQITLVGVVAADSLLNFADYRSAERGFQTLTQVSGRAGRGEEPGQVIIQTYTPRHPVIQAVKTHNYHGFIAQELPQREMLNYPPYGKLILLRCLGTNEREVEKTIQAIAVLCEQLLPKTVEILGPAPASILRIAQRYRWQLLVKYPSFIKVILPLERIKQICPSSVYLDIDVDPLSID.

One can recognise a Helicase ATP-binding domain in the interval 304 to 471; it reads VLPLQGYHQV…HRHQNDPQRH (168 aa). 317–324 is an ATP binding site; that stretch reads GVTGSGKT. The short motif at 413–416 is the DEAH box element; it reads DEEH. Residues C537, C540, C546, C549, C568, C571, C581, and C584 each contribute to the Zn(2+) site. One can recognise a Helicase C-terminal domain in the interval 575-735; that stretch reads EIQPKVCPEC…ELPQREMLNY (161 aa).

Belongs to the helicase family. PriA subfamily. As to quaternary structure, component of the replication restart primosome. Zn(2+) is required as a cofactor.

The enzyme catalyses Couples ATP hydrolysis with the unwinding of duplex DNA by translocating in the 3'-5' direction.. The catalysed reaction is ATP + H2O = ADP + phosphate + H(+). In terms of biological role, initiates the restart of stalled replication forks, which reloads the replicative helicase on sites other than the origin of replication. Recognizes and binds to abandoned replication forks and remodels them to uncover a helicase loading site. Promotes assembly of the primosome at these replication forks. This Synechocystis sp. (strain ATCC 27184 / PCC 6803 / Kazusa) protein is Replication restart protein PriA.